The chain runs to 149 residues: Arginine repressor (149 aa).

Belongs to the ArgR family.

It is found in the cytoplasm. The protein operates within amino-acid biosynthesis; L-arginine biosynthesis [regulation]. Its function is as follows. Regulates arginine biosynthesis genes. In Halalkalibacterium halodurans (strain ATCC BAA-125 / DSM 18197 / FERM 7344 / JCM 9153 / C-125) (Bacillus halodurans), this protein is Arginine repressor.